The chain runs to 191 residues: Ion-translocating oxidoreductase complex subunit B (191 aa).

Positions 1–26 are hydrophobic; sequence MSSLWIAIAAVSAIALVSGLILGFAA. The 59-residue stretch at 32 to 90 folds into the 4Fe-4S domain; it reads EADPIVERIDALLPQSQCGQCGYPGCRPYAEAVANGEKINRCAPGGEAVMRNIAALLAV. Residues Cys49, Cys52, Cys57, Cys73, Cys116, Cys119, Cys122, Cys126, Cys146, Cys149, Cys152, and Cys156 each coordinate [4Fe-4S] cluster. 2 consecutive 4Fe-4S ferredoxin-type domains span residues 107–136 and 137–166; these read QVAL…GATR and ALHT…LVPV.

It belongs to the 4Fe4S bacterial-type ferredoxin family. RnfB subfamily. In terms of assembly, the complex is composed of six subunits: RnfA, RnfB, RnfC, RnfD, RnfE and RnfG. Requires [4Fe-4S] cluster as cofactor.

Its subcellular location is the cell inner membrane. Part of a membrane-bound complex that couples electron transfer with translocation of ions across the membrane. The sequence is that of Ion-translocating oxidoreductase complex subunit B from Edwardsiella ictaluri (strain 93-146).